We begin with the raw amino-acid sequence, 846 residues long: Protein IRS1 (846 aa).

Disordered stretches follow at residues 1 to 82 (MAQR…NFWH), 366 to 385 (TGTAAGTTSPPAASGTETEA), 606 to 626 (WLMEQPPPPSRQTKPDAATMP), and 714 to 846 (QVIP…HVHH). Over residues 16–25 (RGRGAGGPSG) the composition is skewed to gly residues. Over residues 26-56 (VGSSPPSSCVPMGAPSTAGTGASAAATTTPG) the composition is skewed to low complexity. The span at 722 to 732 (EPEDDDEDPTY) shows a compositional bias: acidic residues. The span at 832-846 (RPKKCQTHAPHHVHH) shows a compositional bias: basic residues.

This sequence belongs to the herpesviridae US22 family. Interacts (via N-terminus) with the viral DNA polymerase accessory subunit UL44. Interacts (via C-terminus) with host EIF2AK2/PKR.

It localises to the virion. It is found in the host cytoplasm. The protein resides in the host nucleus. Inhibits the establishment of the antiviral state in the infected cell. Prevents the phosphorylation of the host eukaryotic translation initiation factor eIF-2alpha and thus the shutoff of viral and cellular protein synthesis by directly interacting with EIF2AK2/PKR. May also participate in viral DNA replication by interacting with the DNA polymerase accessory protein and the lytic origin of replication, oriLyt. This Homo sapiens (Human) protein is Protein IRS1 (IRS1).